The primary structure comprises 101 residues: Protein S100-A4 (101 aa).

N-acetylalanine is present on alanine 2. At lysine 7 the chain carries N6-acetyllysine. EF-hand domains follow at residues 13–48 (VSTFHKYSGKEGDKFKLNKSELKELLTRELPSFLGK) and 50–85 (TDETAFQKLMSNLDCNKDNEVDFQEYCVFLSCIAMM). Ca(2+) is bound by residues lysine 28 and glutamate 33. Lysine 35 carries the N6-acetyllysine modification. Residues aspartate 63, asparagine 65, aspartate 67, glutamate 69, and glutamate 74 each coordinate Ca(2+).

The protein belongs to the S-100 family. In terms of assembly, homodimer. Interacts with PPFIBP1 in a calcium-dependent mode. Interacts with PGLYRP1; this complex acts as a chemoattractant that promotes lymphocyte movement. Interacts with MYH9; this interaction increases cell motility. Interacts with Annexin 2/ANXA2. Interacts with TP53; this interaction promotes TP53 degradation. Interacts with CCR5 and CXCR3. Interacts with FCGR3A; this interaction inhibits PKC-dependent phosphorylation of FCGR3A.

It is found in the secreted. Its subcellular location is the nucleus. It localises to the cytoplasm. Calcium-binding protein that plays a role in various cellular processes including motility, angiogenesis, cell differentiation, apoptosis, and autophagy. Increases cell motility and invasiveness by interacting with non-muscle myosin heavy chain (NMMHC) IIA/MYH9. Mechanistically, promotes filament depolymerization and increases the amount of soluble myosin-IIA, resulting in the formation of stable protrusions facilitating chemotaxis. Also modulates the pro-apoptotic function of TP53 by binding to its C-terminal transactivation domain within the nucleus and reducing its protein levels. Within the extracellular space, stimulates cytokine production including granulocyte colony-stimulating factor and CCL24 from T-lymphocytes. In addition, stimulates T-lymphocyte chemotaxis by acting as a chemoattractant complex with PGLYRP1 that promotes lymphocyte migration via CCR5 and CXCR3 receptors. The protein is Protein S100-A4 (S100A4) of Bos taurus (Bovine).